The following is a 575-amino-acid chain: Transcription factor COE2 (575 aa).

An interaction with DNA region spans residues 62 to 65 (RKSN). The C5-type zinc-finger motif lies at 150 to 169 (CRVLLTHEVMCSRCCEKKSC). Interaction with DNA stretches follow at residues 196–203 (NCLKTAGN) and 235–238 (NNSK). The IPT/TIG domain occupies 253–336 (PCIKAISPSE…KGAPGRFIYT (84 aa)). The segment covering 441-453 (STQGNNQGYIRNT) has biased composition (polar residues). Residues 441–479 (STQGNNQGYIRNTSSISPRGYSSSSTPQQSNYSTSSNSM) form a disordered region. Over residues 454–479 (SSISPRGYSSSSTPQQSNYSTSSNSM) the composition is skewed to low complexity.

The protein belongs to the COE family. As to quaternary structure, forms either a homodimer or a heterodimer with a related family member. Interacts with SIX1.

Its subcellular location is the nucleus. Its function is as follows. Transcription factor that, in osteoblasts, activates the decoy receptor for RANKL, TNFRSF11B, which in turn regulates osteoclast differentiation. Acts in synergy with the Wnt-responsive LEF1/CTNNB1 pathway. Recognizes variations of the palindromic sequence 5'-ATTCCCNNGGGAATT-3'. This Bos taurus (Bovine) protein is Transcription factor COE2 (EBF2).